The chain runs to 151 residues: Chaperonin GroEL (151 aa).

41 to 45 (DGTTT) is a binding site for ATP.

It belongs to the chaperonin (HSP60) family. As to quaternary structure, forms a cylinder of 14 subunits composed of two heptameric rings stacked back-to-back. Interacts with the co-chaperonin GroES.

The protein resides in the cytoplasm. It catalyses the reaction ATP + H2O + a folded polypeptide = ADP + phosphate + an unfolded polypeptide.. Together with its co-chaperonin GroES, plays an essential role in assisting protein folding. The GroEL-GroES system forms a nano-cage that allows encapsulation of the non-native substrate proteins and provides a physical environment optimized to promote and accelerate protein folding. The chain is Chaperonin GroEL from Mycobacterium marinum.